The chain runs to 348 residues: MKIIQEIPEKNIIKLIPENLDDLWHLSNIIQPYNAIYAVTERRTEDKGDKLRADRGTKRRVFLGIKAEKINFHEDFNRLRVSGKIIHAPDDIPIGSYHTIDIEPLLQVSVQKNWKKWDLVRLKEAEDSSKKPKVVVVILDDSEADIFLVREFGIKELVSIKSGVSKKLDYKQNEQAKFSYYSDIINSISEFEGKILFAGPGFGKNNIQNYISEKHKDLAPNVVVESANHTGKSGLSEILKSGIIDKIYGEARISKETQVIEKLLEEISKKGLAAYGIESVNNAMNYSAIDTLLLTDEYLRRNRRNIEELMNSVENINGNVLIISTEHDAGKQLKALGGISALLRFPIE.

It belongs to the eukaryotic release factor 1 family. Pelota subfamily. Monomer. Requires a divalent metal cation as cofactor.

It is found in the cytoplasm. May function in recognizing stalled ribosomes, interact with stem-loop structures in stalled mRNA molecules, and effect endonucleolytic cleavage of the mRNA. May play a role in the release non-functional ribosomes and degradation of damaged mRNAs. Has endoribonuclease activity. The protein is Protein pelota homolog of Methanococcus maripaludis (strain C5 / ATCC BAA-1333).